A 378-amino-acid polypeptide reads, in one-letter code: Uroporphyrinogen decarboxylase (378 aa).

Substrate is bound by residues 40-44 (RQAGR), Asp-90, Tyr-167, Ser-222, and His-355.

The protein belongs to the uroporphyrinogen decarboxylase family. As to quaternary structure, homodimer.

The protein resides in the cytoplasm. The catalysed reaction is uroporphyrinogen III + 4 H(+) = coproporphyrinogen III + 4 CO2. It participates in porphyrin-containing compound metabolism; protoporphyrin-IX biosynthesis; coproporphyrinogen-III from 5-aminolevulinate: step 4/4. In terms of biological role, catalyzes the decarboxylation of four acetate groups of uroporphyrinogen-III to yield coproporphyrinogen-III. The protein is Uroporphyrinogen decarboxylase of Psychrobacter arcticus (strain DSM 17307 / VKM B-2377 / 273-4).